The chain runs to 2671 residues: Stalled ribosome sensor GCN1 (2671 aa).

A2 is modified (N-acetylalanine). HEAT repeat units lie at residues 140 to 178, 257 to 293, 294 to 331, 385 to 423, 425 to 459, 460 to 500, 560 to 597, 599 to 636, 700 to 732, and 733 to 772; these read NKLV…ENPG, EFKD…LDLS, QYAL…QCSD, CVAE…EVPK, LTDW…GDTL, LQAL…SKLS, SKVQ…SLGG, KLAN…MGKT, AFIT…SLSV, and LSPD…PAGE. S729 bears the Phosphoserine mark. Residue S786 is modified to Phosphoserine. Positions 804-865 form a coiled coil; the sequence is QIIEMELKEE…EAALGLLDAI (62 aa). HEAT repeat units lie at residues 879–918, 979–1016, 1035–1072, 1078–1115, 1155–1192, 1210–1250, 1251–1289, 1290–1332, 1335–1372, 1374–1410, 1413–1451, 1455–1492, 1493–1530, 1534–1571, 1573–1609, 1611–1648, 1653–1690, 1692–1729, 1731–1769, 1773–1810, 1812–1848, 1921–1958, 1959–1996, 2001–2038, 2039–2074, 2076–2108, 2111–2146, 2147–2184, 2188–2225, 2259–2296, 2301–2338, 2339–2380, 2382–2417, 2422–2459, 2546–2583, 2588–2625, and 2627–2661; these read VLVD…TLGT, SLVF…HAQL, LPRV…SSSG, FAEQ…VLPS, DLQS…RYQR, YRPP…YLDS, SQVK…AHGK, ENVN…HLDK, PKVK…AVKE, AGGM…GLGI, LKQQ…MLGK, PYVV…NLSA, HGVK…CAPK, SCLP…VIRN, EILA…HFID, PSLA…LTDQ, PYLP…GMGE, CFED…GLGV, KLEK…TFGD, PYVG…MYAE, AIAL…HISG, EILP…KLGE, KILP…STSR, FFSE…TIGH, QALE…VKSR, VLPY…LTRH, VILP…VEDD, TGHR…RSKA, SHLR…KLDA, RGVT…LTSA, PSVV…GKVG, IALK…IHVK, DPLF…GAGS, AIRK…FLTD, QLPP…EPRP, QTIK…MRRG, and ELLQ…QADS. Residues 2260–2408 are RWDBD region; the sequence is GVTSILPVLR…GIRDTMLQAL (149 aa). A Phosphoserine modification is found at S2276.

The protein belongs to the GCN1 family. In terms of assembly, interacts with EIF2AK4/GCN2; this interaction stimulates the EIF2AK4/GCN2 kinase activity and is impaired by IMPACT upon a variety of stress conditions, such as amino acid depletion, UV-C irradiation, proteasome inhibitor treatment and glucose deprivation. Interacts with IMPACT; this prevents the interaction of GCN1 with EIF2AK4/GCN2 and inhibits EIF2AK4/GCN2 kinase activity. Interacts with RNF14; interaction takes place following ribosome stalling and promotes recruitment of RNF14. Expressed in the hypothalamus, cortex and hippocampus.

The protein localises to the cytoplasm. Its function is as follows. Ribosome collision sensor that plays a key role in the RNF14-RNF25 translation quality control pathway, a pathway that takes place when a ribosome has stalled during translation, and which promotes ubiquitination and degradation of translation factors on stalled ribosomes. Directly binds to the ribosome and acts as a sentinel for colliding ribosomes: activated following ribosome stalling and promotes recruitment of RNF14, which directly ubiquitinates EEF1A1/eEF1A, leading to its degradation. In addition to EEF1A1/eEF1A, the RNF14-RNF25 translation quality control pathway mediates degradation of ETF1/eRF1 and ubiquitination of ribosomal protein. GCN1 also acts as a positive activator of the integrated stress response (ISR) by mediating activation of EIF2AK4/GCN2 in response to amino acid starvation. Interaction with EIF2AK4/GCN2 on translating ribosomes stimulates EIF2AK4/GCN2 kinase activity, leading to phosphorylation of eukaryotic translation initiation factor 2 (eIF-2-alpha/EIF2S1). EIF2S1/eIF-2-alpha phosphorylation converts EIF2S1/eIF-2-alpha into a global protein synthesis inhibitor, leading to a global attenuation of cap-dependent translation, and thus to a reduced overall utilization of amino acids, while concomitantly initiating the preferential translation of ISR-specific mRNAs, such as the transcriptional activator ATF4, and hence allowing ATF4-mediated reprogramming of amino acid biosynthetic gene expression to alleviate nutrient depletion. The chain is Stalled ribosome sensor GCN1 from Mus musculus (Mouse).